We begin with the raw amino-acid sequence, 274 residues long: MNELKAIIEDAFENRDSISPSSAPDEVRDAVAQAIDLLNSGKGRVAEKIAGEWVVHQWLKKAVLLFFRLHNNDVIEGAESKFYDKVPLKYTNYTAEQFAADGARIVPPAAVRTGTFVGKNAVVMPSYVNIGAFVDEGTMVDTWATVGSCAQIGKNVHLSGGVGIGGVLEPLQANPTIIEDNCFIGARSEIVEGVIVEEGSVISMGVYIGQSTRIYDRETGEIHYGRVPAGSVVVAGNLPSADGKYSLYAAIIVKKVDAKTRAKVGINALLRGVE.

Belongs to the transferase hexapeptide repeat family.

The protein localises to the cytoplasm. It carries out the reaction (S)-2,3,4,5-tetrahydrodipicolinate + succinyl-CoA + H2O = (S)-2-succinylamino-6-oxoheptanedioate + CoA. It participates in amino-acid biosynthesis; L-lysine biosynthesis via DAP pathway; LL-2,6-diaminopimelate from (S)-tetrahydrodipicolinate (succinylase route): step 1/3. The sequence is that of 2,3,4,5-tetrahydropyridine-2,6-dicarboxylate N-succinyltransferase from Alteromonas mediterranea (strain DSM 17117 / CIP 110805 / LMG 28347 / Deep ecotype).